Consider the following 252-residue polypeptide: Chitooligosaccharide deacetylase (252 aa).

Residues H61 and H125 each coordinate Mg(2+).

It belongs to the YdjC deacetylase family. ChbG subfamily. Homodimer. Requires Mg(2+) as cofactor.

It localises to the cytoplasm. The catalysed reaction is N,N'-diacetylchitobiose + H2O = N-acetyl-beta-D-glucosaminyl-(1-&gt;4)-D-glucosamine + acetate. The enzyme catalyses diacetylchitobiose-6'-phosphate + H2O = N'-monoacetylchitobiose-6'-phosphate + acetate. The protein operates within glycan degradation; chitin degradation. Involved in the degradation of chitin. ChbG is essential for growth on the acetylated chitooligosaccharides chitobiose and chitotriose but is dispensable for growth on cellobiose and chitosan dimer, the deacetylated form of chitobiose. Deacetylation of chitobiose-6-P and chitotriose-6-P is necessary for both the activation of the chb promoter by the regulatory protein ChbR and the hydrolysis of phosphorylated beta-glucosides by the phospho-beta-glucosidase ChbF. Catalyzes the removal of only one acetyl group from chitobiose-6-P to yield monoacetylchitobiose-6-P, the inducer of ChbR and the substrate of ChbF. In Salmonella enteritidis PT4 (strain P125109), this protein is Chitooligosaccharide deacetylase.